A 113-amino-acid polypeptide reads, in one-letter code: U11-theraphotoxin-Hhn1k (113 aa).

A signal peptide spans Met1–Ala21. A propeptide spanning residues Asp22–Arg74 is cleaved from the precursor. A disordered region spans residues Glu61–Asp83. Disulfide bonds link Cys75-Cys90, Cys82-Cys95, and Cys89-Cys110.

The protein belongs to the neurotoxin 14 (magi-1) family. 01 (HNTX-16) subfamily. As to expression, expressed by the venom gland.

The protein localises to the secreted. Probable ion channel inhibitor. This is U11-theraphotoxin-Hhn1k from Cyriopagopus hainanus (Chinese bird spider).